We begin with the raw amino-acid sequence, 256 residues long: Thiazole synthase (256 aa).

The Schiff-base intermediate with DXP role is filled by lysine 95. 1-deoxy-D-xylulose 5-phosphate-binding positions include glycine 156, 182–183 (AG), and 204–205 (NT).

Belongs to the ThiG family. Homotetramer. Forms heterodimers with either ThiH or ThiS.

The protein localises to the cytoplasm. It carries out the reaction [ThiS sulfur-carrier protein]-C-terminal-Gly-aminoethanethioate + 2-iminoacetate + 1-deoxy-D-xylulose 5-phosphate = [ThiS sulfur-carrier protein]-C-terminal Gly-Gly + 2-[(2R,5Z)-2-carboxy-4-methylthiazol-5(2H)-ylidene]ethyl phosphate + 2 H2O + H(+). It participates in cofactor biosynthesis; thiamine diphosphate biosynthesis. In terms of biological role, catalyzes the rearrangement of 1-deoxy-D-xylulose 5-phosphate (DXP) to produce the thiazole phosphate moiety of thiamine. Sulfur is provided by the thiocarboxylate moiety of the carrier protein ThiS. In vitro, sulfur can be provided by H(2)S. The polypeptide is Thiazole synthase (Shigella boydii serotype 18 (strain CDC 3083-94 / BS512)).